A 293-amino-acid polypeptide reads, in one-letter code: 4-diphosphocytidyl-2-C-methyl-D-erythritol kinase (293 aa).

Residue Lys-16 is part of the active site. 99–109 (PMGAGLGGGSS) is a binding site for ATP. Asp-141 is a catalytic residue.

Belongs to the GHMP kinase family. IspE subfamily.

It catalyses the reaction 4-CDP-2-C-methyl-D-erythritol + ATP = 4-CDP-2-C-methyl-D-erythritol 2-phosphate + ADP + H(+). The protein operates within isoprenoid biosynthesis; isopentenyl diphosphate biosynthesis via DXP pathway; isopentenyl diphosphate from 1-deoxy-D-xylulose 5-phosphate: step 3/6. In terms of biological role, catalyzes the phosphorylation of the position 2 hydroxy group of 4-diphosphocytidyl-2C-methyl-D-erythritol. The protein is 4-diphosphocytidyl-2-C-methyl-D-erythritol kinase of Burkholderia orbicola (strain MC0-3).